The primary structure comprises 247 residues: MDIDTVRKTAFAMPLTSPAYPPGPYRFINREFFIITYRTDPARLRAMVPEPLEVPEPLVSYEFIRMADSTGFGDYTESGQVIPVTFEGKPGTYTLAMYLDDHPPLAGGREMWGFPKKLATPRLQTSKDTLLGTLDYGPVRVATGTMGYKHKELDLAAQQQRLARPNFLLKIIPHVDGRTARICELSRNTMEDIVMKGAWTGPASLELAHHALAPVADLPVLEIVEARHLIADLTLGMGEVVFDYLAK.

Lysine 116 (schiff-base intermediate with acetoacetate) is an active-site residue.

This sequence belongs to the ADC family.

It catalyses the reaction acetoacetate + H(+) = acetone + CO2. Its function is as follows. Catalyzes the conversion of acetoacetate to acetone and carbon dioxide. The protein is Acetoacetate decarboxylase of Ralstonia nicotianae (strain ATCC BAA-1114 / GMI1000) (Ralstonia solanacearum).